A 218-amino-acid polypeptide reads, in one-letter code: Cytochrome b6 (218 aa).

The helical transmembrane segment at 35–55 threads the bilayer; sequence IFYCLGGITLVCFLIQFATGF. Heme c is bound at residue Cys38. Heme b contacts are provided by His89 and His103. A run of 3 helical transmembrane segments spans residues 93-113, 119-139, and 189-209; these read ASMM…TGGF, LTWV…VTGY, and LHTF…FLMI. Heme b is bound by residues His190 and His205.

Belongs to the cytochrome b family. PetB subfamily. As to quaternary structure, the 4 large subunits of the cytochrome b6-f complex are cytochrome b6, subunit IV (17 kDa polypeptide, PetD), cytochrome f and the Rieske protein, while the 4 small subunits are PetG, PetL, PetM and PetN. The complex functions as a dimer. It depends on heme b as a cofactor. Heme c is required as a cofactor.

The protein resides in the cellular thylakoid membrane. Functionally, component of the cytochrome b6-f complex, which mediates electron transfer between photosystem II (PSII) and photosystem I (PSI), cyclic electron flow around PSI, and state transitions. This Synechococcus sp. (strain WH7803) protein is Cytochrome b6.